The primary structure comprises 208 residues: Mitochondrial import inner membrane translocase subunit Tim23 (208 aa).

Helical transmembrane passes span 73-93 (FELA…FGTL), 125-145 (ASWA…GVAI), and 173-193 (GLKG…LYAL).

Belongs to the Tim17/Tim22/Tim23 family. As to quaternary structure, component of the TIM23 complex at least composed of timm23, timm17 and timm50. The complex interacts with the timm44 component of the PAM complex.

The protein localises to the mitochondrion inner membrane. Functionally, essential component of the TIM23 complex, a complex that mediates the translocation of transit peptide-containing proteins across the mitochondrial inner membrane. Plays an essential role in early embryonic development. This chain is Mitochondrial import inner membrane translocase subunit Tim23 (timm23), found in Danio rerio (Zebrafish).